The sequence spans 193 residues: Ion-translocating oxidoreductase complex subunit A (193 aa).

6 helical membrane passes run 5 to 25, 39 to 59, 63 to 83, 102 to 122, 134 to 154, and 171 to 191; these read LLLFVGTILVNNFVLVKFLGL, MGMGLATTFVMTLASICAWLI, ILIPLNLIYLRTLAFILVIAV, LLGIFLPLITTNCAVLGVALL, ALYGFSAAVGFSLVMVLFTAI, and AIALITAGLMSLAFMGFSGLV.

Belongs to the NqrDE/RnfAE family. The complex is composed of six subunits: RsxA, RsxB, RsxC, RsxD, RsxE and RsxG.

The protein resides in the cell inner membrane. Functionally, part of a membrane-bound complex that couples electron transfer with translocation of ions across the membrane. Required to maintain the reduced state of SoxR. The polypeptide is Ion-translocating oxidoreductase complex subunit A (Shigella boydii serotype 4 (strain Sb227)).